A 408-amino-acid chain; its full sequence is FAD-dependent monooxygenase nscC (408 aa).

Positions 1-20 (MASRLPILIIGAGISGLTTA) are cleaved as a signal peptide. FAD-binding residues include Glu-34 and Ala-45. N-linked (GlcNAc...) asparagine glycans are attached at residues Asn-91 and Asn-103. FAD is bound at residue Arg-119. 2 N-linked (GlcNAc...) asparagine glycosylation sites follow: Asn-170 and Asn-231. The FAD site is built by Asp-328 and Gly-341.

Belongs to the paxM FAD-dependent monooxygenase family. It depends on FAD as a cofactor.

The protein operates within secondary metabolite biosynthesis. FAD-dependent monooxygenase; part of the gene cluster that mediates the biosynthesis of neosartoricin, a prenylated anthracenone that exhibits T-cell antiproliferative activity, suggestive of a physiological role as an immunosuppressive agent. The non-reducing polyketide synthase nscA probably synthesizes and cyclizes the decaketide backbone. The hydrolase nscB then mediates the product release through hydrolysis followed by spontaneous decarboxylation. The prenyltransferase nscD catalyzes the addition of the dimethylallyl group to the aromatic C5. The FAD-dependent monooxygenase nscC is then responsible for the stereospecific hydroxylation at C2. There is no gene encoding O-acetyltransferase in the nsc gene cluster; thus, the last step of 2-O-acetylation leading to neosartoricin may be catalyzed by an unidentified O-acetyltransferase. The chain is FAD-dependent monooxygenase nscC from Aspergillus fumigatus (strain ATCC MYA-4609 / CBS 101355 / FGSC A1100 / Af293) (Neosartorya fumigata).